Consider the following 78-residue polypeptide: MSAHCQVTGRKPGFGNTVSHSHRRSRRRWSPNIQQRTYYLPSEGRRIRLRVSTKGIKVIDRDGIEAVVARLRRQGQRI.

The interval 1-29 (MSAHCQVTGRKPGFGNTVSHSHRRSRRRW) is disordered. Basic residues predominate over residues 20–29 (HSHRRSRRRW).

The protein belongs to the bacterial ribosomal protein bL28 family.

The sequence is that of Large ribosomal subunit protein bL28B (rpmB2) from Mycobacterium bovis (strain ATCC BAA-935 / AF2122/97).